The primary structure comprises 704 residues: Elongation factor G (704 aa).

One can recognise a tr-type G domain in the interval 8 to 290 (EKYRNIGICA…GVVRYLPAPN (283 aa)). GTP is bound by residues 17-24 (AHVDAGKT), 88-92 (DTPGH), and 142-145 (NKMD).

Belongs to the TRAFAC class translation factor GTPase superfamily. Classic translation factor GTPase family. EF-G/EF-2 subfamily.

The protein localises to the cytoplasm. Functionally, catalyzes the GTP-dependent ribosomal translocation step during translation elongation. During this step, the ribosome changes from the pre-translocational (PRE) to the post-translocational (POST) state as the newly formed A-site-bound peptidyl-tRNA and P-site-bound deacylated tRNA move to the P and E sites, respectively. Catalyzes the coordinated movement of the two tRNA molecules, the mRNA and conformational changes in the ribosome. In Francisella tularensis subsp. holarctica (strain LVS), this protein is Elongation factor G.